The chain runs to 182 residues: Constitutive photomorphogenesis protein 10 (182 aa).

One can recognise a UBC core domain in the interval 36–182 (ASGKRIQREM…AKEWTLRFAK (147 aa)).

The protein belongs to the ubiquitin-conjugating enzyme family. In terms of assembly, component of the CDD complex, at least composed of COP10, DET1 and DDB1A. Interacts with E3 ubiquitin ligase COP1. Interacts with E2 ubiquitin conjugating UBC5. Interacts with CSN3, CSN4 and CSN8 subunits of the COP9 complex. Expressed in flower, leaf, stem and seedling. Expressed at lower level in root.

Its subcellular location is the nucleus. Its function is as follows. Component of light signal transduction machinery. Involved in repression of photomorphogenesis in darkness by participating in the CDD complex, a complex probably required to regulate the activity of ubiquitin conjugating enzymes (E2s). Repression of photomorphogenesis is probably mediated by ubiquitination and subsequent degradation of photomorphogenesis-promoting factors such as HY5, HYH and LAF1. Although strongly related to ubiquitin-conjugating enzyme, it has no catalytic activity by itself due to the absence of the conserved Cys active site at position 120. It can however enhance the activity of E2 conjugating enzymes. The protein is Constitutive photomorphogenesis protein 10 (COP10) of Arabidopsis thaliana (Mouse-ear cress).